We begin with the raw amino-acid sequence, 259 residues long: Imidazole glycerol phosphate synthase subunit HisF (259 aa).

Catalysis depends on residues D11 and D130.

Belongs to the HisA/HisF family. In terms of assembly, heterodimer of HisH and HisF.

Its subcellular location is the cytoplasm. It carries out the reaction 5-[(5-phospho-1-deoxy-D-ribulos-1-ylimino)methylamino]-1-(5-phospho-beta-D-ribosyl)imidazole-4-carboxamide + L-glutamine = D-erythro-1-(imidazol-4-yl)glycerol 3-phosphate + 5-amino-1-(5-phospho-beta-D-ribosyl)imidazole-4-carboxamide + L-glutamate + H(+). It participates in amino-acid biosynthesis; L-histidine biosynthesis; L-histidine from 5-phospho-alpha-D-ribose 1-diphosphate: step 5/9. Functionally, IGPS catalyzes the conversion of PRFAR and glutamine to IGP, AICAR and glutamate. The HisF subunit catalyzes the cyclization activity that produces IGP and AICAR from PRFAR using the ammonia provided by the HisH subunit. The chain is Imidazole glycerol phosphate synthase subunit HisF from Shewanella amazonensis (strain ATCC BAA-1098 / SB2B).